The sequence spans 874 residues: Alanine--tRNA ligase (874 aa).

Zn(2+)-binding residues include histidine 563, histidine 567, cysteine 665, and histidine 669.

This sequence belongs to the class-II aminoacyl-tRNA synthetase family. Requires Zn(2+) as cofactor.

The protein resides in the cytoplasm. It carries out the reaction tRNA(Ala) + L-alanine + ATP = L-alanyl-tRNA(Ala) + AMP + diphosphate. In terms of biological role, catalyzes the attachment of alanine to tRNA(Ala) in a two-step reaction: alanine is first activated by ATP to form Ala-AMP and then transferred to the acceptor end of tRNA(Ala). Also edits incorrectly charged Ser-tRNA(Ala) and Gly-tRNA(Ala) via its editing domain. The polypeptide is Alanine--tRNA ligase (Aeromonas salmonicida (strain A449)).